A 317-amino-acid chain; its full sequence is MRSYSLIAPAKINLYLEIIGDRPDGYHELAMILQSIGLSDQIDVRSISTDSIRVHCNHPQVPTDKSNLAYRAAELMVRQFPEAFAKYGGVEITVNKQIPVAAGLAGGSTNAAAVLVGIDLLWKLGLTQSELEELGGTLGSDVPFCVAGGTAIATGRGEQLSPLPSLDNIYIVLGKYRSLEVSTPWAYKTYRQQFGHSYIIDTDNLAARASAVHSGAIVKAILHKDTREIAQKLHNDLERVVLPAYPQVLHLREVFANQEGVLGTMMSGSGPTVFALFESQQQAELVLQQVREAIIDEDLELFVTRTITHGIKVTSSV.

Lys-11 is a catalytic residue. Residue 99–109 (PVAAGLAGGST) participates in ATP binding. Asp-141 is an active-site residue.

It belongs to the GHMP kinase family. IspE subfamily.

The enzyme catalyses 4-CDP-2-C-methyl-D-erythritol + ATP = 4-CDP-2-C-methyl-D-erythritol 2-phosphate + ADP + H(+). Its pathway is isoprenoid biosynthesis; isopentenyl diphosphate biosynthesis via DXP pathway; isopentenyl diphosphate from 1-deoxy-D-xylulose 5-phosphate: step 3/6. In terms of biological role, catalyzes the phosphorylation of the position 2 hydroxy group of 4-diphosphocytidyl-2C-methyl-D-erythritol. The protein is 4-diphosphocytidyl-2-C-methyl-D-erythritol kinase of Nostoc punctiforme (strain ATCC 29133 / PCC 73102).